A 117-amino-acid chain; its full sequence is Small ribosomal subunit protein bS6 (117 aa).

Residues 96-117 form a disordered region; sequence KEAAAPAPKAAPVESAPAVEAE. The span at 99 to 117 shows a compositional bias: low complexity; sequence AAPAPKAAPVESAPAVEAE.

The protein belongs to the bacterial ribosomal protein bS6 family.

In terms of biological role, binds together with bS18 to 16S ribosomal RNA. The protein is Small ribosomal subunit protein bS6 of Geobacter sulfurreducens (strain ATCC 51573 / DSM 12127 / PCA).